The chain runs to 258 residues: UPF0246 protein YaaA (258 aa).

This sequence belongs to the UPF0246 family.

This Escherichia coli O8 (strain IAI1) protein is UPF0246 protein YaaA.